A 142-amino-acid polypeptide reads, in one-letter code: DNA-directed RNA polymerase II subunit RPB4 (142 aa).

Belongs to the eukaryotic RPB4 RNA polymerase subunit family. Component of the RNA polymerase II (Pol II) core complex consisting of 12 subunits: a ten-subunit catalytic core composed of POLR2A/RPB1, POLR2B/RPB2, POLR2C/RPB3, POLR2I/RPB9, POLR2J/RPB11, POLR2E/RPABC1, POLR2F/RPABC2, POLR2H/RPABC3, POLR2K/RPABC4 and POLR2L/RPABC5 and a mobile stalk composed of two subunits POLR2D/RPB4 and POLR2G/RPB7, protruding from the core and functioning primarily in transcription initiation. Part of Pol II(G) complex, in which Pol II core associates with an additional subunit POLR2M; unlike conventional Pol II, Pol II(G) functions as a transcriptional repressor. Part of TBP-based Pol II pre-initiation complex (PIC), in which Pol II core assembles with general transcription factors and other specific initiation factors including GTF2E1, GTF2E2, GTF2F1, GTF2F2, TCEA1, ERCC2, ERCC3, GTF2H2, GTF2H3, GTF2H4, GTF2H5, GTF2A1, GTF2A2, GTF2B and TBP; this large multi-subunit PIC complex mediates DNA unwinding and targets Pol II core to the transcription start site where the first phosphodiester bond forms.

The protein resides in the nucleus. Its function is as follows. Core component of RNA polymerase II (Pol II), a DNA-dependent RNA polymerase which synthesizes mRNA precursors and many functional non-coding RNAs using the four ribonucleoside triphosphates as substrates. Pol II is the central component of the basal RNA polymerase II transcription machinery. It is composed of mobile elements that move relative to each other. POLR2D/RPB4 is part of a subcomplex with POLR2G/RPB7 that binds to a pocket formed by POLR2A/RPB1, POLR2B/RPB2 and POLR2F/RPABC2 at the base of the clamp element. The POLR2D/RPB4-POLR2G/RPB7 subcomplex seems to lock the clamp via POLR2G/RPB7 in the closed conformation thus preventing double-stranded DNA to enter the active site cleft. The POLR2D/RPB4-POLR2G/RPB7 subcomplex binds single-stranded DNA and RNA. This chain is DNA-directed RNA polymerase II subunit RPB4 (POLR2D), found in Homo sapiens (Human).